Here is a 627-residue protein sequence, read N- to C-terminus: Altered inheritance of mitochondria protein 9, mitochondrial (627 aa).

Residues 1-43 constitute a mitochondrion transit peptide; the sequence is MIRYTVAGHSRRCVVGASKRVGAIKCITVAATKRFISNKSNEV.

It belongs to the AIM9 family.

Its subcellular location is the mitochondrion. This Saccharomyces cerevisiae (strain JAY291) (Baker's yeast) protein is Altered inheritance of mitochondria protein 9, mitochondrial (AIM9).